The chain runs to 843 residues: Glycogen phosphorylase, brain form (843 aa).

Ala-2 bears the N-acetylalanine mark. The residue at position 15 (Ser-15) is a Phosphoserine; by PHK; in form phosphorylase A. Positions 43, 197, and 310 each coordinate AMP. At Tyr-197 the chain carries Phosphotyrosine. Tyr-473 is subject to Phosphotyrosine. Residue Lys-569 participates in pyridoxal 5'-phosphate binding. A pyridoxal 5'-phosphate region spans residues 677 to 678 (TG). The residue at position 681 (Lys-681) is an N6-(pyridoxal phosphate)lysine.

The protein belongs to the glycogen phosphorylase family. As to quaternary structure, homodimer. Dimers associate into a tetramer to form the enzymatically active phosphorylase A. The cofactor is pyridoxal 5'-phosphate. Post-translationally, phosphorylation of Ser-15 converts phosphorylase B (unphosphorylated) to phosphorylase A.

The enzyme catalyses [(1-&gt;4)-alpha-D-glucosyl](n) + phosphate = [(1-&gt;4)-alpha-D-glucosyl](n-1) + alpha-D-glucose 1-phosphate. Its activity is regulated as follows. Activity of phosphorylase is controlled both by allosteric means (through the non-covalent binding of metabolites) and by covalent modification. Thus AMP allosterically activates, whereas ATP, ADP, and glucose-6-phosphate allosterically inhibit, phosphorylase B. In terms of biological role, glycogen phosphorylase that regulates glycogen mobilization. Phosphorylase is an important allosteric enzyme in carbohydrate metabolism. Enzymes from different sources differ in their regulatory mechanisms and in their natural substrates. However, all known phosphorylases share catalytic and structural properties. The polypeptide is Glycogen phosphorylase, brain form (PYGB) (Ovis aries (Sheep)).